A 226-amino-acid chain; its full sequence is MLRVPPVIVNFKAYSEAVGENALRLARVAAEVSEETGVEVGICPPHVDLRDVVREVGDEVTVLAQAVDAAEPGGRTGHVTPEMVVEAGADGTLLNHSERRMLLEDLKDVCRACINEGLLTIVCASDALAARAAGALSPHAVAVEPPELIGTGTPVSKADPEVVERSVEVVKEVSEETAVLCGAGITDGSDVRAAVELGADGVLVASGVVLADDPKEALLDLISGLE.

10–12 (NFK) provides a ligand contact to substrate. The active-site Electrophile is the His-96. Catalysis depends on Glu-144, which acts as the Proton acceptor. Substrate-binding positions include Ile-149, Gly-184, and 205–206 (AS).

The protein belongs to the triosephosphate isomerase family. In terms of assembly, homotetramer; dimer of dimers.

It localises to the cytoplasm. The enzyme catalyses D-glyceraldehyde 3-phosphate = dihydroxyacetone phosphate. Its pathway is carbohydrate biosynthesis; gluconeogenesis. It participates in carbohydrate degradation; glycolysis; D-glyceraldehyde 3-phosphate from glycerone phosphate: step 1/1. Involved in the gluconeogenesis. Catalyzes stereospecifically the conversion of dihydroxyacetone phosphate (DHAP) to D-glyceraldehyde-3-phosphate (G3P). The polypeptide is Triosephosphate isomerase (Methanopyrus kandleri (strain AV19 / DSM 6324 / JCM 9639 / NBRC 100938)).